The primary structure comprises 601 residues: Elongation factor 4 (601 aa).

Positions 7–189 (RNIRNFSIIA…AIVHRIPPPK (183 aa)) constitute a tr-type G domain. GTP-binding positions include 19–24 (DHGKST) and 136–139 (NKID).

The protein belongs to the TRAFAC class translation factor GTPase superfamily. Classic translation factor GTPase family. LepA subfamily.

It is found in the cell inner membrane. The enzyme catalyses GTP + H2O = GDP + phosphate + H(+). Its function is as follows. Required for accurate and efficient protein synthesis under certain stress conditions. May act as a fidelity factor of the translation reaction, by catalyzing a one-codon backward translocation of tRNAs on improperly translocated ribosomes. Back-translocation proceeds from a post-translocation (POST) complex to a pre-translocation (PRE) complex, thus giving elongation factor G a second chance to translocate the tRNAs correctly. Binds to ribosomes in a GTP-dependent manner. This Xanthomonas campestris pv. campestris (strain 8004) protein is Elongation factor 4.